The following is a 378-amino-acid chain: Cytochrome b (378 aa).

4 helical membrane passes run 35-55, 79-101, 114-134, and 180-200; these read FGSLLGLVLSIQLVTGIFLAM, WIIRLVHANGASFFFICLYCHIG, TWIMGVLLFILVMAAAFLGYV, and FFSLHFLVPFLVSLGAMLHIF. Positions 85 and 99 each coordinate heme b. Heme b is bound by residues histidine 184 and histidine 198. Position 203 (histidine 203) interacts with a ubiquinone. 4 consecutive transmembrane segments (helical) span residues 226–246, 290–310, 326–346, and 350–370; these read YSAKDLLGFFFMFFFIIFISF, LGGVLGLLCALLVLFSLPLTH, FFWLFIVSFLMLTIGGGQPVC, and VMCSQVWSCLYFTYFILCGPL.

Belongs to the cytochrome b family. The main subunits of complex b-c1 are: cytochrome b, cytochrome c1 and the Rieske protein. The cofactor is heme b.

It is found in the mitochondrion inner membrane. Functionally, component of the ubiquinol-cytochrome c reductase complex (complex III or cytochrome b-c1 complex) that is part of the mitochondrial respiratory chain. The b-c1 complex mediates electron transfer from ubiquinol to cytochrome c. Contributes to the generation of a proton gradient across the mitochondrial membrane that is then used for ATP synthesis. This chain is Cytochrome b (mt:Cyt-b), found in Paraspadella gotoi (Arrow worm).